A 126-amino-acid polypeptide reads, in one-letter code: Larval cuticle protein 2 (126 aa).

A signal peptide spans 1–16; sequence MFKFVMVFAVLGLAAA. The 62-residue stretch at 39-100 folds into the Chitin-binding type R&amp;R domain; the sequence is ADGFDTDLVV…PVGAVLPTPP (62 aa).

In terms of biological role, component of the larval cuticle. This is Larval cuticle protein 2 (Lcp2) from Drosophila miranda (Fruit fly).